A 1324-amino-acid chain; its full sequence is MAPSRRQISGRSPLVNQQRQITSFFGKSASSSSSPSPSPSPSLSNKKTPKSNNPNPKSPSPSPSPPKKTPKLNPNPSSNLPARSPSPGPDTPSPVQSKFKKPLLVIGQTPSPPQSVVITYGDEVVGKQVRVYWPLDKKWYDGSVTFYDKGEGKHVVEYEDGEEESLDLGKEKTEWVVGEKSGDRFNRLKRGASALRKVVTDSDDDVEMGNVEEDKSDGDDSSDEDWGKNVGKEVCESEEDDVELVDENEMDEEELVEEKDEETSKVNRVSKTDSRKRKTSEVTKSGGEKKSKTDTGTILKGFKASVVEPAKKIGQADRVVKGLEDNVLDGDALARFGARDSEKFRFLGVDRRDAKRRRPTDENYDPRTLYLPPDFVKKLTGGQRQWWEFKAKHMDKVVFFKMGKFYELFEMDAHVGAKELDIQYMKGEQPHCGFPEKNFSVNIEKLVRKGYRVLVVEQTETPDQLEQRRKETGSKDKVVKREVCAVVTKGTLTDGEMLLTNPDASYLMALTEGGESLTNPTAEHNFGVCLVDVATQKIILGQFKDDQDCSALSCLLSEMRPVEIIKPAKVLSYATERTIVRQTRNPLVNNLVPLSEFWDSEKTIYEVGIIYKRINCQPSSAYSSEGKILGDGSSFLPKMLSELATEDKNGSLALSALGGAIYYLRQAFLDESLLRFAKFESLPYCDFSNVNEKQHMVLDAAALENLEIFENSRNGGYSGTLYAQLNQCITASGKRLLKTWLARPLYNTELIKERQDAVAILRGENLPYSLEFRKSLSRLPDMERLIARMFSSIEASGRNGDKVVLYEDTAKKQVQEFISTLRGCETMAEACSSLRAILKHDTSRRLLHLLTPGQSLPNISSSIKYFKDAFDWVEAHNSGRVIPHEGADEEYDCACKTVEEFESSLKKHLKEQRKLLGDASINYVTVGKDEYLLEVPESLSGSVPHDYELCSSKKGVSRYWTPTIKKLLKELSQAKSEKESALKSISQRLIGRFCEHQEKWRQLVSATAELDVLISLAFASDSYEGVRCRPVISGSTSDGVPHLSATGLGHPVLRGDSLGRGSFVPNNVKIGGAEKASFILLTGPNMGGKSTLLRQVCLAVILAQIGADVPAETFEVSPVDKICVRMGAKDHIMAGQSTFLTELSETAVMLTSATRNSLVVLDELGRGTATSDGQAIAESVLEHFIEKVQCRGFFSTHYHRLSVDYQTNPKVSLCHMACQIGEGIGGVEEVTFLYRLTPGACPKSYGVNVARLAGLPDYVLQRAVIKSQEFEALYGKNHRKTDHKLAAMIKQIISSVASDSDYSASKDSLCELHSMANTFLRLTN.

A compositionally biased stretch (polar residues) spans 1–25 (MAPSRRQISGRSPLVNQQRQITSFF). Disordered regions lie at residues 1 to 114 (MAPS…SPPQ) and 197 to 294 (KVVT…SKTD). Low complexity predominate over residues 27 to 55 (KSASSSSSPSPSPSPSLSNKKTPKSNNPN). Residues 56–67 (PKSPSPSPSPPK) are compositionally biased toward pro residues. Positions 71-83 (KLNPNPSSNLPAR) are enriched in low complexity. Over residues 201-224 (DSDDDVEMGNVEEDKSDGDDSSDE) the composition is skewed to acidic residues. Residues 225–235 (DWGKNVGKEVC) are compositionally biased toward basic and acidic residues. The segment covering 236–261 (ESEEDDVELVDENEMDEEELVEEKDE) has biased composition (acidic residues). Residues 262–273 (ETSKVNRVSKTD) are compositionally biased toward basic and acidic residues. 1083-1090 (GPNMGGKS) serves as a coordination point for ATP.

It belongs to the DNA mismatch repair MutS family. As to quaternary structure, heterodimer consisting of MSH2-MSH6 (MutS alpha).

The protein resides in the nucleus. In terms of biological role, component of the post-replicative DNA mismatch repair system (MMR). Forms the heterodimer MutS alpha (MSH2-MSH6 heterodimer) which binds to DNA mismatches thereby initiating DNA repair. MutS alpha recognizes single base mismatches and trinucleotide insertion-deletion loops (IDL) in the DNA. Is involved in a UV-B-induced DNA damage response pathway. This Arabidopsis thaliana (Mouse-ear cress) protein is DNA mismatch repair protein MSH6 (MSH6).